The sequence spans 131 residues: Hydrogenase maturation factor HypA (131 aa).

His-2 serves as a coordination point for Ni(2+). Zn(2+) is bound by residues Cys-73, Cys-76, Cys-105, and Cys-108.

This sequence belongs to the HypA/HybF family.

Involved in the maturation of [NiFe] hydrogenases. Required for nickel insertion into the metal center of the hydrogenase. The polypeptide is Hydrogenase maturation factor HypA (Thermomicrobium roseum (strain ATCC 27502 / DSM 5159 / P-2)).